Reading from the N-terminus, the 232-residue chain is Putative N-acetylmannosamine-6-phosphate 2-epimerase (232 aa).

This sequence belongs to the NanE family.

The enzyme catalyses an N-acyl-D-glucosamine 6-phosphate = an N-acyl-D-mannosamine 6-phosphate. It participates in amino-sugar metabolism; N-acetylneuraminate degradation; D-fructose 6-phosphate from N-acetylneuraminate: step 3/5. In terms of biological role, converts N-acetylmannosamine-6-phosphate (ManNAc-6-P) to N-acetylglucosamine-6-phosphate (GlcNAc-6-P). In Borreliella burgdorferi (strain ZS7) (Borrelia burgdorferi), this protein is Putative N-acetylmannosamine-6-phosphate 2-epimerase.